We begin with the raw amino-acid sequence, 392 residues long: Phosphoglycerate kinase (392 aa).

Residues 21-23, Arg-36, 59-62, Arg-113, and Arg-146 each bind substrate; these read DFN and HLGR. Residues Lys-197, Glu-319, and 345–348 each bind ATP; that span reads GGDT.

This sequence belongs to the phosphoglycerate kinase family. Monomer.

Its subcellular location is the cytoplasm. The catalysed reaction is (2R)-3-phosphoglycerate + ATP = (2R)-3-phospho-glyceroyl phosphate + ADP. The protein operates within carbohydrate degradation; glycolysis; pyruvate from D-glyceraldehyde 3-phosphate: step 2/5. In Francisella philomiragia subsp. philomiragia (strain ATCC 25017 / CCUG 19701 / FSC 153 / O#319-036), this protein is Phosphoglycerate kinase.